The sequence spans 426 residues: Serine--tRNA ligase (426 aa).

231–233 serves as a coordination point for L-serine; it reads TAE. Position 262 to 264 (262 to 264) interacts with ATP; that stretch reads RAE. Glu285 serves as a coordination point for L-serine. 349–352 contributes to the ATP binding site; it reads EISS. Ser385 is an L-serine binding site.

This sequence belongs to the class-II aminoacyl-tRNA synthetase family. Type-1 seryl-tRNA synthetase subfamily. As to quaternary structure, homodimer. The tRNA molecule binds across the dimer.

It is found in the cytoplasm. It catalyses the reaction tRNA(Ser) + L-serine + ATP = L-seryl-tRNA(Ser) + AMP + diphosphate + H(+). The catalysed reaction is tRNA(Sec) + L-serine + ATP = L-seryl-tRNA(Sec) + AMP + diphosphate + H(+). Its pathway is aminoacyl-tRNA biosynthesis; selenocysteinyl-tRNA(Sec) biosynthesis; L-seryl-tRNA(Sec) from L-serine and tRNA(Sec): step 1/1. In terms of biological role, catalyzes the attachment of serine to tRNA(Ser). Is also able to aminoacylate tRNA(Sec) with serine, to form the misacylated tRNA L-seryl-tRNA(Sec), which will be further converted into selenocysteinyl-tRNA(Sec). This Myxococcus xanthus (strain DK1622) protein is Serine--tRNA ligase.